The chain runs to 277 residues: tRNA pseudouridine synthase A (277 aa).

D57 (nucleophile) is an active-site residue. Position 115 (Y115) interacts with substrate.

Belongs to the tRNA pseudouridine synthase TruA family. In terms of assembly, homodimer.

The catalysed reaction is uridine(38/39/40) in tRNA = pseudouridine(38/39/40) in tRNA. Formation of pseudouridine at positions 38, 39 and 40 in the anticodon stem and loop of transfer RNAs. The sequence is that of tRNA pseudouridine synthase A from Nitratidesulfovibrio vulgaris (strain DSM 19637 / Miyazaki F) (Desulfovibrio vulgaris).